A 162-amino-acid polypeptide reads, in one-letter code: Nascent polypeptide-associated complex subunit beta (162 aa).

Disordered regions lie at residues 1–39 (MPVD…NISE) and 130–162 (EQAK…DNVE). Residues 24-33 (TPRRPGKKVA) show a composition bias toward basic residues. The NAC-A/B domain maps to 38 to 103 (SEDEKKLSAT…SQQKDIAELI (66 aa)). A compositionally biased stretch (acidic residues) spans 146–162 (GDDEIPNLVENFEDNVE).

It belongs to the NAC-beta family. In terms of assembly, part of the nascent polypeptide-associated complex (NAC), consisting of EGD2 and EGD1. NAC associates with ribosomes via EGD1.

The protein localises to the cytoplasm. The protein resides in the nucleus. Component of the nascent polypeptide-associated complex (NAC), a dynamic component of the ribosomal exit tunnel, protecting the emerging polypeptides from interaction with other cytoplasmic proteins to ensure appropriate nascent protein targeting. The NAC complex also promotes mitochondrial protein import by enhancing productive ribosome interactions with the outer mitochondrial membrane and blocks the inappropriate interaction of ribosomes translating non-secretory nascent polypeptides with translocation sites in the membrane of the endoplasmic reticulum. EGD1 may act as a transcription factor that exert a negative effect on the expression of several genes that are transcribed by RNA polymerase II. This chain is Nascent polypeptide-associated complex subunit beta (EGD1), found in Yarrowia lipolytica (strain CLIB 122 / E 150) (Yeast).